Consider the following 99-residue polypeptide: Integration host factor subunit alpha (99 aa).

This sequence belongs to the bacterial histone-like protein family. In terms of assembly, heterodimer of an alpha and a beta chain.

In terms of biological role, this protein is one of the two subunits of integration host factor, a specific DNA-binding protein that functions in genetic recombination as well as in transcriptional and translational control. The chain is Integration host factor subunit alpha from Psychrobacter cryohalolentis (strain ATCC BAA-1226 / DSM 17306 / VKM B-2378 / K5).